We begin with the raw amino-acid sequence, 481 residues long: Glucokinase-1 (481 aa).

In terms of domain architecture, Hexokinase spans 4–477 (PKLTKAVDSI…SGVGAALCAL (474 aa)). Residues 64–204 (SGQEHGVTML…LSNVHVVALT (141 aa)) are hexokinase small subdomain. Lys-101 contacts ATP. Residues 146 to 172 (KMGFTFSYPVDQTSLSSGKLIRWTKGF) form a glucose-binding region. The tract at residues 205–466 (NDTTGTLLAR…RDVHLRISKD (262 aa)) is hexokinase large subdomain. Position 466-471 (466-471 (DGSGVG)) interacts with ATP.

The protein belongs to the hexokinase family.

It carries out the reaction D-glucose + ATP = D-glucose 6-phosphate + ADP + H(+). The catalysed reaction is a D-hexose + ATP = a D-hexose 6-phosphate + ADP + H(+). It catalyses the reaction D-mannose + ATP = D-mannose 6-phosphate + ADP + H(+). The protein operates within carbohydrate metabolism; hexose metabolism. It participates in carbohydrate degradation; glycolysis; D-glyceraldehyde 3-phosphate and glycerone phosphate from D-glucose: step 1/4. Its function is as follows. Glukokinase specific for aldohexoses. Phosphorylates glucose and mannose, but not fructose. The protein is Glucokinase-1 (GLK1) of Kluyveromyces lactis (strain ATCC 8585 / CBS 2359 / DSM 70799 / NBRC 1267 / NRRL Y-1140 / WM37) (Yeast).